A 244-amino-acid chain; its full sequence is Leucyl/phenylalanyl-tRNA--protein transferase (244 aa).

The tract at residues 1–22 is disordered; sequence MHSQPYLLSPAPNNTPFPPAEH.

This sequence belongs to the L/F-transferase family.

It is found in the cytoplasm. It carries out the reaction N-terminal L-lysyl-[protein] + L-leucyl-tRNA(Leu) = N-terminal L-leucyl-L-lysyl-[protein] + tRNA(Leu) + H(+). The catalysed reaction is N-terminal L-arginyl-[protein] + L-leucyl-tRNA(Leu) = N-terminal L-leucyl-L-arginyl-[protein] + tRNA(Leu) + H(+). It catalyses the reaction L-phenylalanyl-tRNA(Phe) + an N-terminal L-alpha-aminoacyl-[protein] = an N-terminal L-phenylalanyl-L-alpha-aminoacyl-[protein] + tRNA(Phe). Functionally, functions in the N-end rule pathway of protein degradation where it conjugates Leu, Phe and, less efficiently, Met from aminoacyl-tRNAs to the N-termini of proteins containing an N-terminal arginine or lysine. This is Leucyl/phenylalanyl-tRNA--protein transferase from Xylella fastidiosa (strain M12).